A 363-amino-acid polypeptide reads, in one-letter code: NAD(P)H-quinone oxidoreductase subunit 1, chloroplastic (363 aa).

A run of 8 helical transmembrane segments spans residues 30 to 50 (LVPI…IVWL), 98 to 118 (FSIG…VIPF), 127 to 147 (LSIG…GLLM), 165 to 185 (AAQS…ISLL), 203 to 223 (FWGW…ISSL), 248 to 268 (YSGI…LVSS), 300 to 320 (VFGT…FLFI), and 336 to 356 (LLNL…LLTT).

It belongs to the complex I subunit 1 family. In terms of assembly, NDH is composed of at least 16 different subunits, 5 of which are encoded in the nucleus.

It is found in the plastid. Its subcellular location is the chloroplast thylakoid membrane. It carries out the reaction a plastoquinone + NADH + (n+1) H(+)(in) = a plastoquinol + NAD(+) + n H(+)(out). It catalyses the reaction a plastoquinone + NADPH + (n+1) H(+)(in) = a plastoquinol + NADP(+) + n H(+)(out). Functionally, NDH shuttles electrons from NAD(P)H:plastoquinone, via FMN and iron-sulfur (Fe-S) centers, to quinones in the photosynthetic chain and possibly in a chloroplast respiratory chain. The immediate electron acceptor for the enzyme in this species is believed to be plastoquinone. Couples the redox reaction to proton translocation, and thus conserves the redox energy in a proton gradient. The polypeptide is NAD(P)H-quinone oxidoreductase subunit 1, chloroplastic (Solanum lycopersicum (Tomato)).